The primary structure comprises 335 residues: Polyprenol dehydrogenase (335 aa).

Positions 55, 208, 212, and 245 each coordinate NAD(+). Tyr-208 serves as the catalytic Proton acceptor.

The protein belongs to the short-chain dehydrogenases/reductases (SDR) family.

The protein localises to the lipid droplet. Its subcellular location is the secreted. It catalyses the reaction a di-trans,poly-cis-polyprenol + NAD(+) = a di-trans,poly-cis-polyprenal + NADH + H(+). It carries out the reaction a di-trans,poly-cis-polyprenol + NADP(+) = a di-trans,poly-cis-polyprenal + NADPH + H(+). The enzyme catalyses a di-trans,poly-cis-dolichol + NADP(+) = a di-trans,poly-cis-dolichal + NADPH + H(+). The catalysed reaction is a di-trans,poly-cis-dolichol + NAD(+) = a di-trans,poly-cis-dolichal + NADH + H(+). It participates in protein modification; protein glycosylation. Oxidoreductase that plays a key role in early steps of protein N-linked glycosylation by mediating two non-consecutive steps in dolichol biosynthesis. Acts both as a NAD(+)-dependent dehydrogenase and as a NADPH-dependent reductase during the conversion of polyprenol into dolichol. First catalyzes the NAD(+)-dependent dehydrogenation of polyprenol into polyprenal; polyprenal is then reduced into dolichal by SRD5A3. It then catalyzes the NADPH-dependent reduction of dolichal into dolichol. May also acts as a positive regulator of starvation-induced autophagy. In Mus musculus (Mouse), this protein is Polyprenol dehydrogenase (Dhrsx).